Consider the following 349-residue polypeptide: UDP-N-acetylenolpyruvoylglucosamine reductase (349 aa).

The FAD-binding PCMH-type domain maps to 24 to 197 (FGIDATARFA…VAVTFRLPKR (174 aa)). The active site involves R173. The active-site Proton donor is S249. E345 is a catalytic residue.

The protein belongs to the MurB family. It depends on FAD as a cofactor.

The protein localises to the cytoplasm. It carries out the reaction UDP-N-acetyl-alpha-D-muramate + NADP(+) = UDP-N-acetyl-3-O-(1-carboxyvinyl)-alpha-D-glucosamine + NADPH + H(+). The protein operates within cell wall biogenesis; peptidoglycan biosynthesis. Its function is as follows. Cell wall formation. This chain is UDP-N-acetylenolpyruvoylglucosamine reductase, found in Burkholderia ambifaria (strain ATCC BAA-244 / DSM 16087 / CCUG 44356 / LMG 19182 / AMMD) (Burkholderia cepacia (strain AMMD)).